A 272-amino-acid polypeptide reads, in one-letter code: Undecaprenyl-diphosphatase (272 aa).

Transmembrane regions (helical) follow at residues 42–62 (FGLS…VVFF), 92–112 (YLVL…EDFF), 120–140 (WVVV…EAVG), 149–169 (MGFA…VPGV), 194–214 (FLMS…EVLA), 224–244 (MFAV…RFFI), and 252–272 (LRAF…LLLL).

Belongs to the UppP family.

It is found in the cell membrane. The catalysed reaction is di-trans,octa-cis-undecaprenyl diphosphate + H2O = di-trans,octa-cis-undecaprenyl phosphate + phosphate + H(+). Its function is as follows. Catalyzes the dephosphorylation of undecaprenyl diphosphate (UPP). Confers resistance to bacitracin. The polypeptide is Undecaprenyl-diphosphatase (Rubrobacter xylanophilus (strain DSM 9941 / JCM 11954 / NBRC 16129 / PRD-1)).